Consider the following 257-residue polypeptide: Imidazole glycerol phosphate synthase subunit HisF (257 aa).

Residues D12 and D131 contribute to the active site.

Belongs to the HisA/HisF family. Heterodimer of HisH and HisF.

Its subcellular location is the cytoplasm. It carries out the reaction 5-[(5-phospho-1-deoxy-D-ribulos-1-ylimino)methylamino]-1-(5-phospho-beta-D-ribosyl)imidazole-4-carboxamide + L-glutamine = D-erythro-1-(imidazol-4-yl)glycerol 3-phosphate + 5-amino-1-(5-phospho-beta-D-ribosyl)imidazole-4-carboxamide + L-glutamate + H(+). The protein operates within amino-acid biosynthesis; L-histidine biosynthesis; L-histidine from 5-phospho-alpha-D-ribose 1-diphosphate: step 5/9. Its function is as follows. IGPS catalyzes the conversion of PRFAR and glutamine to IGP, AICAR and glutamate. The HisF subunit catalyzes the cyclization activity that produces IGP and AICAR from PRFAR using the ammonia provided by the HisH subunit. This Rhodococcus opacus (strain B4) protein is Imidazole glycerol phosphate synthase subunit HisF.